The chain runs to 330 residues: Ketol-acid reductoisomerase (NADP(+)) (330 aa).

Residues 2–182 (VKVYYDADAN…GCTKAGVFET (181 aa)) enclose the KARI N-terminal Rossmann domain. Residues 25-28 (YGSQ), R48, S51, and 83-86 (DEIQ) each bind NADP(+). Residue H108 is part of the active site. G134 serves as a coordination point for NADP(+). In terms of domain architecture, KARI C-terminal knotted spans 183-328 (SFREETETDL…ARLREMMPWL (146 aa)). Residues D191, E195, E227, and E231 each coordinate Mg(2+). Position 252 (S252) interacts with substrate.

Belongs to the ketol-acid reductoisomerase family. It depends on Mg(2+) as a cofactor.

The enzyme catalyses (2R)-2,3-dihydroxy-3-methylbutanoate + NADP(+) = (2S)-2-acetolactate + NADPH + H(+). It carries out the reaction (2R,3R)-2,3-dihydroxy-3-methylpentanoate + NADP(+) = (S)-2-ethyl-2-hydroxy-3-oxobutanoate + NADPH + H(+). It functions in the pathway amino-acid biosynthesis; L-isoleucine biosynthesis; L-isoleucine from 2-oxobutanoate: step 2/4. It participates in amino-acid biosynthesis; L-valine biosynthesis; L-valine from pyruvate: step 2/4. Functionally, involved in the biosynthesis of branched-chain amino acids (BCAA). Catalyzes an alkyl-migration followed by a ketol-acid reduction of (S)-2-acetolactate (S2AL) to yield (R)-2,3-dihydroxy-isovalerate. In the isomerase reaction, S2AL is rearranged via a Mg-dependent methyl migration to produce 3-hydroxy-3-methyl-2-ketobutyrate (HMKB). In the reductase reaction, this 2-ketoacid undergoes a metal-dependent reduction by NADPH to yield (R)-2,3-dihydroxy-isovalerate. This is Ketol-acid reductoisomerase (NADP(+)) from Desulforamulus reducens (strain ATCC BAA-1160 / DSM 100696 / MI-1) (Desulfotomaculum reducens).